We begin with the raw amino-acid sequence, 419 residues long: BTB/POZ domain-containing protein KCTD20 (419 aa).

Positions 117 to 191 (EKVTLLVDGT…YKTGIINCPD (75 aa)) constitute a BTB domain.

In terms of assembly, interacts with AKT1; AKT2 and AKT3. Associates with PP2CA. Part of a complex containing MARK4.

It localises to the cytoplasm. Functionally, promotes the phosphorylation of AKT family members. In Homo sapiens (Human), this protein is BTB/POZ domain-containing protein KCTD20 (KCTD20).